Here is a 138-residue protein sequence, read N- to C-terminus: uncharacterized protein (138 aa).

Its subcellular location is the plastid. It is found in the chloroplast. This is an uncharacterized protein from Chlorella vulgaris (Green alga).